The following is a 247-amino-acid chain: 3-deoxy-manno-octulosonate cytidylyltransferase (247 aa).

It belongs to the KdsB family.

The protein localises to the cytoplasm. The catalysed reaction is 3-deoxy-alpha-D-manno-oct-2-ulosonate + CTP = CMP-3-deoxy-beta-D-manno-octulosonate + diphosphate. It participates in nucleotide-sugar biosynthesis; CMP-3-deoxy-D-manno-octulosonate biosynthesis; CMP-3-deoxy-D-manno-octulosonate from 3-deoxy-D-manno-octulosonate and CTP: step 1/1. Its pathway is bacterial outer membrane biogenesis; lipopolysaccharide biosynthesis. Activates KDO (a required 8-carbon sugar) for incorporation into bacterial lipopolysaccharide in Gram-negative bacteria. The sequence is that of 3-deoxy-manno-octulosonate cytidylyltransferase from Methylorubrum extorquens (strain CM4 / NCIMB 13688) (Methylobacterium extorquens).